We begin with the raw amino-acid sequence, 524 residues long: Bifunctional purine biosynthesis protein PurH (524 aa).

An MGS-like domain is found at 1–144 (MTRRALVSVS…KNSAHVGVVV (144 aa)).

Belongs to the PurH family.

The catalysed reaction is (6R)-10-formyltetrahydrofolate + 5-amino-1-(5-phospho-beta-D-ribosyl)imidazole-4-carboxamide = 5-formamido-1-(5-phospho-D-ribosyl)imidazole-4-carboxamide + (6S)-5,6,7,8-tetrahydrofolate. The enzyme catalyses IMP + H2O = 5-formamido-1-(5-phospho-D-ribosyl)imidazole-4-carboxamide. The protein operates within purine metabolism; IMP biosynthesis via de novo pathway; 5-formamido-1-(5-phospho-D-ribosyl)imidazole-4-carboxamide from 5-amino-1-(5-phospho-D-ribosyl)imidazole-4-carboxamide (10-formyl THF route): step 1/1. It functions in the pathway purine metabolism; IMP biosynthesis via de novo pathway; IMP from 5-formamido-1-(5-phospho-D-ribosyl)imidazole-4-carboxamide: step 1/1. This is Bifunctional purine biosynthesis protein PurH from Anaeromyxobacter dehalogenans (strain 2CP-1 / ATCC BAA-258).